We begin with the raw amino-acid sequence, 213 residues long: Tellurium resistance protein TerX (213 aa).

It belongs to the CAPAB/TerDEXZ family.

Its function is as follows. Not known; seems to contribute to the tellurium resistance (Ter) mechanism. Also involved in phage inhibition (Phi) and colicin resistance (PacB). The protein is Tellurium resistance protein TerX (terX) of Serratia marcescens.